A 397-amino-acid polypeptide reads, in one-letter code: Lymphoid enhancer-binding factor 1 (397 aa).

The tract at residues 1-60 is CTNNB1-binding; the sequence is MPQLSGGGGGGDPELCATDEMIPFKDEGDPQKEKIFAEISHPEEEGDLADIKSSLVNESE. A Glycyl lysine isopeptide (Lys-Gly) (interchain with G-Cter in SUMO) cross-link involves residue Lys25. Residues 59 to 102 form a disordered region; the sequence is SEIIPASNGHEVVRQAPSSQEPYHDKAREHPDEGKHPDGGLYNK. The span at 80–96 shows a compositional bias: basic and acidic residues; that stretch reads PYHDKAREHPDEGKHPD. Ser130 carries the phosphoserine modification. Thr153 bears the Phosphothreonine; by NLK mark. A Phosphoserine; by NLK modification is found at Ser164. Disordered stretches follow at residues 164–191 and 266–296; these read SPGS…APEI and VKQE…KRPH. A Glycyl lysine isopeptide (Lys-Gly) (interchain with G-Cter in SUMO) cross-link involves residue Lys267. The span at 267–294 shows a compositional bias: basic and acidic residues; the sequence is KQEHPHTDSDLMHVKPQHEQRKEQEPKR. A DNA-binding region (HMG box) is located at residues 297 to 365; that stretch reads IKKPLNAFML…LHMQLYPGWS (69 aa). Residues 367–397 are disordered; the sequence is RDNYGKKKKRKREKLQESTSGTGPRMTAAYI.

Belongs to the TCF/LEF family. As to quaternary structure, binds the armadillo repeat of CTNNB1 and forms a stable complex. Binds TLE1, ALYREF/THOC4, MDFI and MDFIC. Interacts with NLK. Interacts with EP300 and PIASG. Interacts with DAZAP2. In terms of processing, phosphorylated at Thr-153 and/or Ser-164 by NLK. Phosphorylation by NLK at these sites represses LEF1-mediated transcriptional activation of target genes of the canonical Wnt signaling pathway. As to expression, expressed in Vgamma1.1 and Vgamma2 gamma-delta T-cells, however not expressed in gamma-delta thymocytes fated for Il17a expression (at protein level). Expressed in alpha-beta T-cell lineages. Expressed in the thymus. Found in distinct epithelial cell compartments of the skin and is abundant in the hair-producing progenitors of the follicle.

It localises to the nucleus. In terms of biological role, transcription factor that binds DNA in a sequence-specific manner. Participates in the Wnt signaling pathway. Activates transcription of target genes in the presence of CTNNB1 and EP300. PIASG antagonizes both Wnt-dependent and Wnt-independent activation by LEF1. TLE1, TLE2, TLE3 and TLE4 repress transactivation mediated by LEF1 and CTNNB1. Regulates T-cell receptor alpha enhancer function. Required for IL17A expressing gamma-delta T-cell maturation and development, via binding to regulator loci of BLK to modulate expression. Acts as a positive regulator of odontoblast differentiation during mesenchymal tooth germ formation, expression is repressed during the bell stage by MSX1-mediated inhibition of CTNNB1 signaling. May play a role in hair cell differentiation and follicle morphogenesis. The polypeptide is Lymphoid enhancer-binding factor 1 (Mus musculus (Mouse)).